A 200-amino-acid chain; its full sequence is Imidazole glycerol phosphate synthase subunit HisH (200 aa).

The Glutamine amidotransferase type-1 domain occupies 3-200; that stretch reads DVALIDAGGA…LHNFLEMSFP (198 aa). C78 (nucleophile) is an active-site residue. Residues H179 and E181 contribute to the active site.

As to quaternary structure, heterodimer of HisH and HisF.

The protein resides in the cytoplasm. The enzyme catalyses 5-[(5-phospho-1-deoxy-D-ribulos-1-ylimino)methylamino]-1-(5-phospho-beta-D-ribosyl)imidazole-4-carboxamide + L-glutamine = D-erythro-1-(imidazol-4-yl)glycerol 3-phosphate + 5-amino-1-(5-phospho-beta-D-ribosyl)imidazole-4-carboxamide + L-glutamate + H(+). The catalysed reaction is L-glutamine + H2O = L-glutamate + NH4(+). Its pathway is amino-acid biosynthesis; L-histidine biosynthesis; L-histidine from 5-phospho-alpha-D-ribose 1-diphosphate: step 5/9. In terms of biological role, IGPS catalyzes the conversion of PRFAR and glutamine to IGP, AICAR and glutamate. The HisH subunit catalyzes the hydrolysis of glutamine to glutamate and ammonia as part of the synthesis of IGP and AICAR. The resulting ammonia molecule is channeled to the active site of HisF. The sequence is that of Imidazole glycerol phosphate synthase subunit HisH from Xanthomonas oryzae pv. oryzae (strain MAFF 311018).